The primary structure comprises 279 residues: L-ascorbate peroxidase 5, peroxisomal (279 aa).

Catalysis depends on His39, which acts as the Proton acceptor. Residues 111-134 (PFTPGRKDADSADDGELPNPNEGA) are disordered. His158 contacts heme b. K(+) contacts are provided by Thr159, Thr175, and Asp182. The chain crosses the membrane as a helical span at residues 251 to 271 (AVTQQTLGIAVAAAVVIFTIC). An AKR2A-binding sequence (ABS) required for peroxisome membrane targeting motif is present at residues 272 to 279 (YEASRRGK).

The protein belongs to the peroxidase family. Ascorbate peroxidase subfamily. In terms of assembly, interacts with AKR2A and AKR2B. It depends on heme b as a cofactor.

The protein localises to the peroxisome membrane. The catalysed reaction is L-ascorbate + H2O2 = L-dehydroascorbate + 2 H2O. Its function is as follows. Plays a key role in hydrogen peroxide removal. In Arabidopsis thaliana (Mouse-ear cress), this protein is L-ascorbate peroxidase 5, peroxisomal (APX5).